The following is a 360-amino-acid chain: Peptide chain release factor 1 (360 aa).

Glutamine 237 carries the post-translational modification N5-methylglutamine.

Belongs to the prokaryotic/mitochondrial release factor family. Methylated by PrmC. Methylation increases the termination efficiency of RF1.

Its subcellular location is the cytoplasm. Its function is as follows. Peptide chain release factor 1 directs the termination of translation in response to the peptide chain termination codons UAG and UAA. The chain is Peptide chain release factor 1 from Ectopseudomonas mendocina (strain ymp) (Pseudomonas mendocina).